A 532-amino-acid chain; its full sequence is Flavin-containing monooxygenase 3 (532 aa).

FAD contacts are provided by residues 9-13 (GAGVS), glutamate 32, 40-41 (LW), and 61-62 (NS). NADP(+)-binding positions include 60–61 (SN) and 195–198 (SGCD). Serine 401 is modified (phosphoserine). A helical transmembrane segment spans residues 510–530 (FFFHWLKLFAIPILLIAVFLV).

The protein belongs to the FMO family. Requires FAD as cofactor.

The protein resides in the microsome membrane. It localises to the endoplasmic reticulum membrane. The catalysed reaction is trimethylamine + NADPH + O2 = trimethylamine N-oxide + NADP(+) + H2O. It catalyses the reaction N,N-dimethylaniline + NADPH + O2 + H(+) = N,N-dimethylaniline N-oxide + NADP(+) + H2O. The enzyme catalyses hypotaurine + NADPH + O2 + H(+) = taurine + NADP(+) + H2O. It carries out the reaction (S)-nicotine + NADPH + O2 = trans-(S)-nicotine N(1')-oxide + NADP(+) + H2O. The catalysed reaction is albendazole + NADPH + O2 + H(+) = albendazole S-oxide + NADP(+) + H2O. Functionally, essential hepatic enzyme that catalyzes the oxygenation of a wide variety of nitrogen- and sulfur-containing compounds including drugs as well as dietary compounds. Plays an important role in the metabolism of trimethylamine (TMA), via the production of trimethylamine N-oxide (TMAO) metabolite. TMA is generated by the action of gut microbiota using dietary precursors such as choline, choline containing compounds, betaine or L-carnitine. By regulating TMAO concentration, FMO3 directly impacts both platelet responsiveness and rate of thrombus formation. The polypeptide is Flavin-containing monooxygenase 3 (FMO3) (Pan troglodytes (Chimpanzee)).